The following is a 256-amino-acid chain: Gramicidin S biosynthesis protein GrsT (256 aa).

Ser-95 is a catalytic residue.

The protein belongs to the thioesterase family.

Its pathway is antibiotic biosynthesis; gramicidin S biosynthesis. Probable thioesterase involved in the biosynthesis of gramicidin S. This is Gramicidin S biosynthesis protein GrsT (grsT) from Aneurinibacillus migulanus (Bacillus migulanus).